Here is a 440-residue protein sequence, read N- to C-terminus: Xylose isomerase (440 aa).

Active-site residues include His101 and Asp104. 7 residues coordinate Mg(2+): Glu232, Glu268, His271, Asp296, Asp307, Asp309, and Asp339.

It belongs to the xylose isomerase family. Homotetramer. The cofactor is Mg(2+).

It localises to the cytoplasm. The enzyme catalyses alpha-D-xylose = alpha-D-xylulofuranose. The protein is Xylose isomerase of Escherichia coli (strain SE11).